Consider the following 136-residue polypeptide: Acidic phospholipase A2 EC-I (136 aa).

A signal peptide spans 1-16 (MKTLWIVAVWLIAVEG). 7 cysteine pairs are disulfide-bonded: Cys-42-Cys-129, Cys-44-Cys-60, Cys-59-Cys-111, Cys-65-Cys-136, Cys-66-Cys-104, Cys-73-Cys-97, and Cys-91-Cys-102. 3 residues coordinate Ca(2+): Tyr-43, Gly-45, and Gly-47. The active site involves His-63. Asp-64 serves as a coordination point for Ca(2+). Asp-105 is an active-site residue. Residues 112-133 (LGENVNTYDKKYKSYEDCTEEV) form a may be responsible for inhibition of the platelet-aggregation activity region.

Belongs to the phospholipase A2 family. Group II subfamily. D49 sub-subfamily. As to quaternary structure, monomer. Ca(2+) is required as a cofactor. In terms of tissue distribution, expressed by the venom gland.

It is found in the secreted. The catalysed reaction is a 1,2-diacyl-sn-glycero-3-phosphocholine + H2O = a 1-acyl-sn-glycero-3-phosphocholine + a fatty acid + H(+). Snake venom phospholipase A2 (PLA2) that inhibits human platelet aggregation induced by ADP, collagen and epinephrin (possibly by binding the platelet receptor alpha-IIb/beta-III) and induces mild edema in the foot pads of mice. PLA2 catalyzes the calcium-dependent hydrolysis of the 2-acyl groups in 3-sn-phosphoglycerides. This is Acidic phospholipase A2 EC-I from Echis carinatus (Saw-scaled viper).